A 450-amino-acid polypeptide reads, in one-letter code: UDP-N-acetylmuramoylalanine--D-glutamate ligase (450 aa).

115–121 (GTNGKTT) serves as a coordination point for ATP.

It belongs to the MurCDEF family.

Its subcellular location is the cytoplasm. The catalysed reaction is UDP-N-acetyl-alpha-D-muramoyl-L-alanine + D-glutamate + ATP = UDP-N-acetyl-alpha-D-muramoyl-L-alanyl-D-glutamate + ADP + phosphate + H(+). The protein operates within cell wall biogenesis; peptidoglycan biosynthesis. Cell wall formation. Catalyzes the addition of glutamate to the nucleotide precursor UDP-N-acetylmuramoyl-L-alanine (UMA). The chain is UDP-N-acetylmuramoylalanine--D-glutamate ligase from Caldanaerobacter subterraneus subsp. tengcongensis (strain DSM 15242 / JCM 11007 / NBRC 100824 / MB4) (Thermoanaerobacter tengcongensis).